A 368-amino-acid chain; its full sequence is E3 ubiquitin-protein ligase makorin (368 aa).

C3H1-type zinc fingers lie at residues 2–29 (STKR…HDWN) and 30–57 (DQPN…HVKV). The tract at residues 58–81 (SRNPTVAPPPSSSTTTRASSSLQP) is disordered. The span at 69-78 (SSTTTRASSS) shows a compositional bias: low complexity. The segment at 147 to 174 (PADLPICSFAAGGNCPYGEECPQMHGDL) adopts a C3H1-type 3 zinc-finger fold. The tract at residues 175-202 (CTTCGKMCLHPYRPDEREEHTKLCEKNH) is makorin-type Cys-His. The RING-type zinc-finger motif lies at 216–274 (CSVCLDRVLSKPTAAERKFGLLSECDHPFCISCIRNWRNNSPTSGMDVNSALRACPICR). The C3H1-type 4 zinc finger occupies 303–332 (KLKSIDCKYFDFGTGTCPFGSSCFYKHAYR).

In terms of tissue distribution, expressed in primary roots and leaves. Detected in vascular bundle tissues.

The enzyme catalyses S-ubiquitinyl-[E2 ubiquitin-conjugating enzyme]-L-cysteine + [acceptor protein]-L-lysine = [E2 ubiquitin-conjugating enzyme]-L-cysteine + N(6)-ubiquitinyl-[acceptor protein]-L-lysine.. It participates in protein modification; protein ubiquitination. Functionally, E3 ubiquitin ligase catalyzing the covalent attachment of ubiquitin moieties onto substrate proteins. This chain is E3 ubiquitin-protein ligase makorin (MKRN), found in Oryza sativa subsp. japonica (Rice).